The sequence spans 475 residues: Ribulose bisphosphate carboxylase large chain (475 aa).

2 residues coordinate substrate: N123 and T173. K175 (proton acceptor) is an active-site residue. Substrate is bound at residue K177. Mg(2+)-binding residues include K201, D203, and E204. K201 bears the N6-carboxylysine mark. H294 (proton acceptor) is an active-site residue. Positions 295, 327, and 379 each coordinate substrate.

The protein belongs to the RuBisCO large chain family. Type I subfamily. Heterohexadecamer of 8 large chains and 8 small chains. Requires Mg(2+) as cofactor.

Its subcellular location is the plastid. The protein localises to the chloroplast. The catalysed reaction is 2 (2R)-3-phosphoglycerate + 2 H(+) = D-ribulose 1,5-bisphosphate + CO2 + H2O. It carries out the reaction D-ribulose 1,5-bisphosphate + O2 = 2-phosphoglycolate + (2R)-3-phosphoglycerate + 2 H(+). In terms of biological role, ruBisCO catalyzes two reactions: the carboxylation of D-ribulose 1,5-bisphosphate, the primary event in carbon dioxide fixation, as well as the oxidative fragmentation of the pentose substrate in the photorespiration process. Both reactions occur simultaneously and in competition at the same active site. The chain is Ribulose bisphosphate carboxylase large chain from Bigelowiella natans (Pedinomonas minutissima).